Consider the following 78-residue polypeptide: Nucleocapsid VP1 (78 aa).

Homodimer.

Its subcellular location is the virion. Its function is as follows. Completely wraps the viral circular dsDNA genome to form a nucleoprotein filament. These interactions between the viral genome and the nucleocapsid proteins probably maintain the DNA in A-form. This certainly protects the viral DNA under conditions such as the extreme desiccation of its host. The sequence is that of Nucleocapsid VP1 from Sulfolobus (SPV1).